The primary structure comprises 352 residues: Maleylacetate reductase (352 aa).

Belongs to the iron-containing alcohol dehydrogenase family.

The catalysed reaction is 3-oxoadipate + NAD(+) = maleylacetate + NADH + H(+). The enzyme catalyses 3-oxoadipate + NADP(+) = maleylacetate + NADPH + H(+). The protein operates within aromatic compound metabolism; 3-chlorocatechol degradation. The protein is Maleylacetate reductase (clcE) of Pseudomonas aeruginosa.